The sequence spans 338 residues: UDP-N-acetylenolpyruvoylglucosamine reductase (338 aa).

The region spanning 17-188 (IAARTDWWID…MYVDYRLRLR (172 aa)) is the FAD-binding PCMH-type domain. Residue R164 is part of the active site. S237 acts as the Proton donor in catalysis. E333 is a catalytic residue.

The protein belongs to the MurB family. It depends on FAD as a cofactor.

It localises to the cytoplasm. It carries out the reaction UDP-N-acetyl-alpha-D-muramate + NADP(+) = UDP-N-acetyl-3-O-(1-carboxyvinyl)-alpha-D-glucosamine + NADPH + H(+). The protein operates within cell wall biogenesis; peptidoglycan biosynthesis. In terms of biological role, cell wall formation. The chain is UDP-N-acetylenolpyruvoylglucosamine reductase from Porphyromonas gingivalis (strain ATCC 33277 / DSM 20709 / CIP 103683 / JCM 12257 / NCTC 11834 / 2561).